The sequence spans 494 residues: Probable cytosol aminopeptidase (494 aa).

Positions 260 and 265 each coordinate Mn(2+). Residue K272 is part of the active site. Positions 283, 342, and 344 each coordinate Mn(2+). Residue R346 is part of the active site.

Belongs to the peptidase M17 family. Requires Mn(2+) as cofactor.

The protein localises to the cytoplasm. It carries out the reaction Release of an N-terminal amino acid, Xaa-|-Yaa-, in which Xaa is preferably Leu, but may be other amino acids including Pro although not Arg or Lys, and Yaa may be Pro. Amino acid amides and methyl esters are also readily hydrolyzed, but rates on arylamides are exceedingly low.. The catalysed reaction is Release of an N-terminal amino acid, preferentially leucine, but not glutamic or aspartic acids.. Functionally, presumably involved in the processing and regular turnover of intracellular proteins. Catalyzes the removal of unsubstituted N-terminal amino acids from various peptides. The polypeptide is Probable cytosol aminopeptidase (Bacillus cereus (strain ATCC 10987 / NRS 248)).